Consider the following 887-residue polypeptide: Collagen alpha-2(I) chain (887 aa).

Residues 1–42 (GPMGIMGPRGPPGASGAPGPQGFQGPPGEPGEPGQTGPAGAR) show a composition bias toward low complexity. Residues 1-887 (GPMGIMGPRG…PGPPGPPGPS (887 aa)) form a disordered region. Basic and acidic residues predominate over residues 51-65 (AGEDGHPGKPGRSGE). 7 stretches are compositionally biased toward low complexity: residues 126–155 (VGAP…SAGP), 170–194 (PVGS…VSGP), 221–236 (PGPV…RGIV), 278–290 (IRGS…IPGA), 368–388 (AGIA…AQGP), 444–455 (PGESGAAGPTGP), and 473–503 (EPGV…IPGP). Residues 504 to 517 (KGEKGEPGIRRDGA) are compositionally biased toward basic and acidic residues. 6 stretches are compositionally biased toward low complexity: residues 518–533 (RGAP…AGAN), 560–580 (VGPA…QPGA), 595–605 (ATGFPGAAGRT), 658–673 (PGPQ…IGIP), 690–720 (EPGP…APGE), and 766–782 (EPGP…VGPR). A compositionally biased stretch (basic and acidic residues) spans 791–802 (RGDKGEPGDKGP). The span at 872–887 (AGPPGPPGPPGPPGPS) shows a compositional bias: pro residues.

The protein belongs to the fibrillar collagen family. As to quaternary structure, trimers of one alpha 2(I) and two alpha 1(I) chains. Interacts (via C-terminus) with TMEM131 (via PapD-L domain); the interaction is direct and is involved in assembly and TRAPPIII ER-to-Golgi transport complex-dependent secretion of collagen. In terms of processing, prolines at the third position of the tripeptide repeating unit (G-X-Y) are hydroxylated in some or all of the chains. As to expression, forms the fibrils of tendon, ligaments and bones. In bones, the fibrils are mineralized with calcium hydroxyapatite.

Its subcellular location is the secreted. The protein localises to the extracellular space. It localises to the extracellular matrix. Functionally, type I collagen is a member of group I collagen (fibrillar forming collagen). The sequence is that of Collagen alpha-2(I) chain from Hippopotamus amphibius (Hippopotamus).